A 382-amino-acid chain; its full sequence is Mating-type protein a-1 (382 aa).

Positions 116–184 form a DNA-binding region, HMG box; that stretch reads IPRPPNAYIL…RLLLENPDYR (69 aa).

Binds in vitro to DNA containing a specific core sequence 5'-CTTTG-3'.

It is found in the nucleus. Functionally, mating type proteins are sequence specific DNA-binding proteins that act as master switches in yeast differentiation by controlling gene expression in a cell type-specific fashion. Transcriptional activator that induces the transcription of a-specific genes like mating factor mfa-1. Required for mating as an a-cell, blocking of heterokaryon formation (vegetative incompatibility) and for perithecium induction. The protein is Mating-type protein a-1 (mta-1) of Neurospora crassa.